A 223-amino-acid chain; its full sequence is Thymidine kinase (223 aa).

ATP is bound by residues glycine 19–threonine 26 and aspartate 96–glutamine 99. Residue glutamate 97 is the Proton acceptor of the active site. Zn(2+)-binding residues include cysteine 153, cysteine 156, cysteine 191, and histidine 194.

The protein belongs to the thymidine kinase family. As to quaternary structure, homotetramer.

It localises to the cytoplasm. It catalyses the reaction thymidine + ATP = dTMP + ADP + H(+). This is Thymidine kinase from Ureaplasma urealyticum serovar 10 (strain ATCC 33699 / Western).